We begin with the raw amino-acid sequence, 79 residues long: Calcium/calmodulin-dependent protein kinase II inhibitor 2 (79 aa).

Residues 1 to 21 are disordered; sequence MSEILPYGEDKMGRFGADPEG. Residues 43 to 69 form an inhibitory domain region; it reads KRPPKLGQIGRAKRVVIEDDRIDDVLK.

Belongs to the CAMK2N family. As to quaternary structure, interacts with CAMK2A and CAMK2B in the presence of Ca(2+)/calmodulin or after autophosphorylation.

It localises to the nucleus. Its subcellular location is the cytoplasm. The protein resides in the cytosol. It is found in the synapse. Functionally, potent and specific cellular inhibitor of CaM-kinase II (CAMK2). Traps Ca(2+)/calmodulin on CAMK2. The sequence is that of Calcium/calmodulin-dependent protein kinase II inhibitor 2 (Camk2n2) from Mus musculus (Mouse).